The following is a 64-amino-acid chain: Large ribosomal subunit protein uL29 (64 aa).

This sequence belongs to the universal ribosomal protein uL29 family.

The chain is Large ribosomal subunit protein uL29 from Burkholderia mallei (strain NCTC 10247).